The sequence spans 479 residues: Anaerobic nitric oxide reductase flavorubredoxin (479 aa).

The zinc metallo-hydrolase stretch occupies residues 30-210; sequence LRGSSYNSYL…PFSRLVTPKI (181 aa). Fe cation-binding residues include His79, Glu81, Asp83, His147, Asp166, and His227. One can recognise a Flavodoxin-like domain in the interval 254–393; sequence ITIFYDTMSN…LCREHGREIA (140 aa). FMN contacts are provided by residues 260–264 and 342–369; these read TMSNN and AFGS…EMSL. One can recognise a Rubredoxin-like domain in the interval 423-479; that stretch reads GPRMQCSVCQWIYDPAKGEPMQDVAPGTPWSEVPDNFLCPECSLGKDVFEELASEAK. Fe cation contacts are provided by Cys428, Cys431, Cys461, and Cys464.

This sequence in the N-terminal section; belongs to the zinc metallo-hydrolase group 3 family. As to quaternary structure, homotetramer. Requires Fe cation as cofactor. FMN serves as cofactor.

It localises to the cytoplasm. It participates in nitrogen metabolism; nitric oxide reduction. In terms of biological role, anaerobic nitric oxide reductase; uses NADH to detoxify nitric oxide (NO), protecting several 4Fe-4S NO-sensitive enzymes. Has at least 2 reductase partners, only one of which (NorW, flavorubredoxin reductase) has been identified. NO probably binds to the di-iron center; electrons enter from the reductase at rubredoxin and are transferred sequentially to the FMN center and the di-iron center. Also able to function as an aerobic oxygen reductase. This Escherichia coli (strain K12 / DH10B) protein is Anaerobic nitric oxide reductase flavorubredoxin (norV).